The sequence spans 77 residues: Conotoxin Ar5.1 a (77 aa).

The first 19 residues, 1–19 (MLCLPVFIILLLLASPAAS), serve as a signal peptide directing secretion. Residues 20–44 (NPLETRIQSDLIRAALEDADMKNEK) constitute a propeptide that is removed on maturation.

This sequence belongs to the conotoxin T superfamily. In terms of processing, contains 2 disulfide bonds that can be either 'C1-C3, C2-C4' or 'C1-C4, C2-C3', since these disulfide connectivities have been observed for conotoxins with cysteine framework V (for examples, see AC P0DQQ7 and AC P81755). In terms of tissue distribution, expressed by the venom duct.

Its subcellular location is the secreted. The polypeptide is Conotoxin Ar5.1 a (Conus arenatus (Sand-dusted cone)).